The primary structure comprises 431 residues: Galactose-3-O-sulfotransferase 3 (431 aa).

The Cytoplasmic portion of the chain corresponds to 1–19; it reads MPPILQRLQQSTKMMSHRK. Residues 20 to 40 form a helical; Signal-anchor for type II membrane protein membrane-spanning segment; sequence ILLLVLGCSTVSLLIHQGSQL. At 41-431 the chain is on the lumenal side; that stretch reads SWYPKLFPLS…RALPRIPQGT (391 aa). Asn91, Asn110, Asn177, and Asn302 each carry an N-linked (GlcNAc...) asparagine glycan. The segment at 400–431 is disordered; that stretch reads KRRGGVRSRPESVLDNPPPRPIRALPRIPQGT. Residues 421-431 are compositionally biased toward low complexity; the sequence is IRALPRIPQGT.

The protein belongs to the galactose-3-O-sulfotransferase family. Mg(2+) is required as a cofactor.

It is found in the golgi apparatus. It localises to the golgi stack membrane. The protein operates within protein modification; carbohydrate sulfation. Functionally, transfers a sulfate to position 3 of non-reducing beta-galactosyl residues in N-glycans and core2-branched O-glycans. Has high activity towards Gal-beta-1,4-GlcNAc, Gal-beta-1,4(Fuc-alpha-1,3)GlcNAc and lower activity towards Gal-beta-1,3(Fuc-alpha-1,4)GlcNAc. The polypeptide is Galactose-3-O-sulfotransferase 3 (Gal3st3) (Mus musculus (Mouse)).